We begin with the raw amino-acid sequence, 344 residues long: 2-methyl-6-phytyl-1,4-hydroquinone methyltransferase, chloroplastic (344 aa).

The transit peptide at 1-62 directs the protein to the chloroplast; it reads MACSMLNGVD…LTTVTKCTLS (62 aa). The Chloroplast intermembrane portion of the chain corresponds to 63-313; sequence ASERPASQPR…PVHPLVFLYR (251 aa). The SAM motif I stretch occupies residues 121 to 130; the sequence is VVDVGGGTGF. The SAM motif II stretch occupies residues 166-179; that stretch reads CRIIEGDAEDLPFP. Positions 207–220 are SAM motif III; sequence RVLKLGGKACLIGP. The chain crosses the membrane as a helical span at residues 314–334; that stretch reads FLLGALASTYYVLVPIYMWIK. Residues 335–344 lie on the Stromal side of the membrane; it reads DKIFPKGMPL.

Belongs to the class I-like SAM-binding methyltransferase superfamily. MPBQ/MBSQ MT family.

The protein resides in the plastid. It localises to the chloroplast inner membrane. It catalyses the reaction 2-methyl-6-phytyl-1,4-benzene-1,4-diol + S-adenosyl-L-methionine = 2,3-dimethyl-6-phytylbenzene-1,4-diol + S-adenosyl-L-homocysteine + H(+). The enzyme catalyses 2-methyl-6-(all-trans-nonaprenyl)benzene-1,4-diol + S-adenosyl-L-methionine = plastoquinol-9 + S-adenosyl-L-homocysteine + H(+). The catalysed reaction is 6-geranylgeranyl-2-methylbenzene-1,4-diol + S-adenosyl-L-methionine = 6-geranylgeranyl-2,3-dimethylbenzene-1,4-diol + S-adenosyl-L-homocysteine + H(+). Its pathway is cofactor biosynthesis; tocopherol biosynthesis. Functionally, involved in a key methylation step in both tocopherols (vitamin E) and plastoquinone synthesis. Catalyzes the conversion of 2-methyl-6-phytyl-1,4-hydroquinone (MPBQ) to 2,3-dimethyl-6-phytyl-1,4-hydroquinone (DMPQ, a substrate for tocopherol cyclase), and 2-methyl-6-solanyl-1,4-benzoquinone (MSBQ) to plastoquinone. The chain is 2-methyl-6-phytyl-1,4-hydroquinone methyltransferase, chloroplastic from Spinacia oleracea (Spinach).